The primary structure comprises 255 residues: Triosephosphate isomerase (255 aa).

9–11 (NWK) lines the substrate pocket. His-95 (electrophile) is an active-site residue. Residue Glu-167 is the Proton acceptor of the active site. Residues Gly-173, Ser-212, and 233–234 (GG) each bind substrate.

It belongs to the triosephosphate isomerase family. Homodimer.

The protein localises to the cytoplasm. The enzyme catalyses D-glyceraldehyde 3-phosphate = dihydroxyacetone phosphate. It participates in carbohydrate biosynthesis; gluconeogenesis. It functions in the pathway carbohydrate degradation; glycolysis; D-glyceraldehyde 3-phosphate from glycerone phosphate: step 1/1. In terms of biological role, involved in the gluconeogenesis. Catalyzes stereospecifically the conversion of dihydroxyacetone phosphate (DHAP) to D-glyceraldehyde-3-phosphate (G3P). The protein is Triosephosphate isomerase of Serratia proteamaculans (strain 568).